A 165-amino-acid polypeptide reads, in one-letter code: MNLSKTGLPFLWISAVAFFTDLITKLAVVKNFSLYESINILPFFNLTYVRNHGAAFSFLADHAGWQKYFFILLALVVSFMILFFLYKNQATQKLQNTGYALMVGGALANAADRAYHGFVVDFFDFYWQQWHYPVFNIADVAICIGAGLLAIDAFKQNDKKESKQN.

3 consecutive transmembrane segments (helical) span residues 9–29 (PFLW…LAVV), 65–85 (WQKY…LFFL), and 97–119 (TGYA…HGFV). Catalysis depends on residues Asp-121 and Asp-139. A helical membrane pass occupies residues 134–154 (VFNIADVAICIGAGLLAIDAF).

The protein belongs to the peptidase A8 family.

It is found in the cell inner membrane. The catalysed reaction is Release of signal peptides from bacterial membrane prolipoproteins. Hydrolyzes -Xaa-Yaa-Zaa-|-(S,diacylglyceryl)Cys-, in which Xaa is hydrophobic (preferably Leu), and Yaa (Ala or Ser) and Zaa (Gly or Ala) have small, neutral side chains.. It participates in protein modification; lipoprotein biosynthesis (signal peptide cleavage). This protein specifically catalyzes the removal of signal peptides from prolipoproteins. The chain is Lipoprotein signal peptidase from Histophilus somni (strain 129Pt) (Haemophilus somnus).